A 229-amino-acid chain; its full sequence is Large ribosomal subunit protein uL1 (229 aa).

Belongs to the universal ribosomal protein uL1 family. As to quaternary structure, part of the 50S ribosomal subunit.

Functionally, binds directly to 23S rRNA. The L1 stalk is quite mobile in the ribosome, and is involved in E site tRNA release. In terms of biological role, protein L1 is also a translational repressor protein, it controls the translation of the L11 operon by binding to its mRNA. The polypeptide is Large ribosomal subunit protein uL1 (Mannheimia succiniciproducens (strain KCTC 0769BP / MBEL55E)).